A 242-amino-acid chain; its full sequence is Small ribosomal subunit protein eS4 (242 aa).

One can recognise an S4 RNA-binding domain in the interval 43–106 (LPLMIIVRDI…GDVYRVLPDE (64 aa)).

This sequence belongs to the eukaryotic ribosomal protein eS4 family.

This Methanothermobacter thermautotrophicus (strain ATCC 29096 / DSM 1053 / JCM 10044 / NBRC 100330 / Delta H) (Methanobacterium thermoautotrophicum) protein is Small ribosomal subunit protein eS4 (rps4e).